Here is a 629-residue protein sequence, read N- to C-terminus: tRNA uridine 5-carboxymethylaminomethyl modification enzyme MnmG (629 aa).

FAD is bound by residues 14–19, Val-126, and Ser-181; that span reads GAGHAG. 273–287 contacts NAD(+); it reads GPRYCPSIEDKVVRF. An FAD-binding site is contributed by Gln-370.

It belongs to the MnmG family. Homodimer. Heterotetramer of two MnmE and two MnmG subunits. It depends on FAD as a cofactor.

It is found in the cytoplasm. Functionally, NAD-binding protein involved in the addition of a carboxymethylaminomethyl (cmnm) group at the wobble position (U34) of certain tRNAs, forming tRNA-cmnm(5)s(2)U34. The polypeptide is tRNA uridine 5-carboxymethylaminomethyl modification enzyme MnmG (Bacillus thuringiensis (strain Al Hakam)).